The sequence spans 476 residues: PRAME family member 6 (476 aa).

The LRR 1; degenerate repeat unit spans residues 97–124; it reads RWKLQVLDLQDVCENFWMVWSEAMARGC. The stretch at 179–203 is one LRR 2; degenerate repeat; the sequence is HLCCKKLKILGMPFRNIRSILKMVN. An LRR 3; degenerate repeat occupies 204–230; sequence LDCIQEVEVNCKWVLPILTQFTPYLGH. An LRR 4; degenerate repeat occupies 231–266; that stretch reads MRNLQKLVLSHMDVSRYVSPEQKKEIVTQFTTQFLK. LRR repeat units follow at residues 267-292, 293-324, 325-345, 349-376, and 377-401; these read LCCL…LSCL, KTSL…SQLK, TLDL…QILL, AATL…ALSR, and CFEL…LLSH.

Belongs to the PRAME family. As to quaternary structure, component of a CRL2 E3 ubiquitin-protein ligase complex, also named ECS (Elongin BC-CUL2/5-SOCS-box protein) complex, composed of CUL2, Elongin BC (ELOB and ELOC), RBX1 and substrate-specific adapter PRAMEF6.

It participates in protein modification; protein ubiquitination. Its function is as follows. Substrate-recognition component of a Cul2-RING (CRL2) E3 ubiquitin-protein ligase complex, which mediates ubiquitination of target proteins, leading to their degradation. The CRL2(PRAMEF6) complex mediates ubiquitination and degradation of truncated MSRB1/SEPX1 selenoproteins produced by failed UGA/Sec decoding. This chain is PRAME family member 6, found in Homo sapiens (Human).